The chain runs to 455 residues: Probable glycine dehydrogenase (decarboxylating) subunit 1 (455 aa).

This sequence belongs to the GcvP family. N-terminal subunit subfamily. As to quaternary structure, the glycine cleavage system is composed of four proteins: P, T, L and H. In this organism, the P 'protein' is a heterodimer of two subunits.

The enzyme catalyses N(6)-[(R)-lipoyl]-L-lysyl-[glycine-cleavage complex H protein] + glycine + H(+) = N(6)-[(R)-S(8)-aminomethyldihydrolipoyl]-L-lysyl-[glycine-cleavage complex H protein] + CO2. Functionally, the glycine cleavage system catalyzes the degradation of glycine. The P protein binds the alpha-amino group of glycine through its pyridoxal phosphate cofactor; CO(2) is released and the remaining methylamine moiety is then transferred to the lipoamide cofactor of the H protein. The polypeptide is Probable glycine dehydrogenase (decarboxylating) subunit 1 (Saccharolobus islandicus (strain M.16.27) (Sulfolobus islandicus)).